Reading from the N-terminus, the 435-residue chain is KSGMEKTVQELVKELRKMSSVVQTDKDLANVACVSAGGNTDIGSLISDAMAKVGRTGVVTMEEGKTAEDQLVFVEGMQFERGYTSPYFVTDPERMICEYENCKILLVDKKISTARDIITILESAIRGNYPLLIMAEEVEQEALATLVVNKLRGTLKVVAIKAPGFGERRSSYLEDIAILTGGTVVGDEMGVSLEQATDAVLGTAAKITITKERTTVVGDGSTAADVAARVKQIRNLQMQTDQDYEREKLQERIARLSGGVAIIQVGAQTETELKEKKLRVEDALNATRAAVEEGVVPGGGCTLLRLSEKVDVIKRRMTDPEQQMGADIIKRALCYPIKLIAQNAGVNGSVVMNEVMKNLDRPHYGYNAATDSFENLMETGIIDPSKVVRCSMENAVSVAKTFLLADVVVTELKEIEAGAKPNPVAPGAAGFGGGL.

It belongs to the chaperonin (HSP60) family. As to quaternary structure, oligomer of probably six alpha and six beta subunits.

The protein localises to the plastid. It is found in the chloroplast. In terms of biological role, this protein binds RuBisCO small and large subunits and is implicated in the assembly of the enzyme oligomer. The chain is RuBisCO large subunit-binding protein subunit beta-1 from Chlamydomonas reinhardtii (Chlamydomonas smithii).